Reading from the N-terminus, the 103-residue chain is Large ribosomal subunit protein bL21 (103 aa).

Belongs to the bacterial ribosomal protein bL21 family. Part of the 50S ribosomal subunit. Contacts protein L20.

In terms of biological role, this protein binds to 23S rRNA in the presence of protein L20. This is Large ribosomal subunit protein bL21 from Verminephrobacter eiseniae (strain EF01-2).